The chain runs to 148 residues: Large ribosomal subunit protein uL15 (148 aa).

The segment at 1-57 (MRLNDVKPQKGSKKRRRRVGRGISAGQGASAGLGMRGQKSRSGSGTRPGFEGGQQPL) is disordered. The segment covering 10-20 (KGSKKRRRRVG) has biased composition (basic residues). Residues 23 to 35 (ISAGQGASAGLGM) are compositionally biased toward gly residues.

This sequence belongs to the universal ribosomal protein uL15 family. As to quaternary structure, part of the 50S ribosomal subunit.

In terms of biological role, binds to the 23S rRNA. The protein is Large ribosomal subunit protein uL15 of Nostoc sp. (strain PCC 7120 / SAG 25.82 / UTEX 2576).